The following is a 167-amino-acid chain: Protein FimG (167 aa).

Residues 1–23 (MKWCKRGYVLAAILALASATIQA) form the signal peptide. Cysteine 39 and cysteine 77 are disulfide-bonded.

The protein belongs to the fimbrial protein family.

The protein localises to the fimbrium. In terms of biological role, involved in regulation of length and mediation of adhesion of type 1 fimbriae (but not necessary for the production of fimbriae). Involved in the integration of FimH in the fimbriae. The protein is Protein FimG (fimG) of Escherichia coli (strain K12).